The chain runs to 423 residues: Immunity-related GTPase family M protein 3 (423 aa).

Residues 83 to 260 (YRVKIAVTGD…PELRNTLQKD (178 aa)) form the IRG-type G domain. GTP is bound by residues 92-99 (DSGNGMSS), 117-121 (TGVVR), and 200-202 (KLD).

This sequence belongs to the TRAFAC class dynamin-like GTPase superfamily. IRG family.

Its subcellular location is the endoplasmic reticulum. The protein localises to the cytoplasmic vesicle membrane. It localises to the lipid droplet. The enzyme catalyses GTP + H2O = GDP + phosphate + H(+). Immunity-related GTPase that plays important roles in host resistance to acute infection by protozoan, such as Toxoplasma gondii and Leishmania major. Acts as a dynamin-like protein that binds to intracellular membranes and promotes remodeling and trafficking of those membranes. Acts predominantly to restrict acute protozoan infection: expression is required in both hematopoietic and non-hematopoietic cellular compartments and is dependent on Stat1. Only plays a partial role in the control of latent Toxoplasma infection. Involved in the clearance of acute protozoan infections by regulating autophagy, possibly by promoting the fusion of phagosomes with lysosomes for efficient degradation of vacuoles containing parasites. Probably involved in membrane disruption of parasite-containing vacuoles. In addition to its role in resistance to acute infection by protozoan, also acts as a negative regulator of the integrated stress response (ISR) following coxsackievirus B3 infection. Promotes differentiation of activated CD8(+) T-cells. In Mus musculus (Mouse), this protein is Immunity-related GTPase family M protein 3.